We begin with the raw amino-acid sequence, 214 residues long: MTLILNPESARVLGCLIEKEITTPEYYPLSLNALINACNQKSNRDPAMSLDEDSVRVALRNLTDKGLARHAPSEGRVPKYEHDVNNAMQLSRREVAILCELLLRGPQTPGELRGRAERMYKFEGIEDVHSTLQRLMERDPALVVVLPRQPGTKEARYTHTLMPVDMQPQPAVEVSHSVSGGNDGRIAQLEAEVRELRAEIETLKEQVKSLTPVN.

The protein belongs to the UPF0502 family.

The sequence is that of UPF0502 protein Acid345_3645 from Koribacter versatilis (strain Ellin345).